A 454-amino-acid chain; its full sequence is Aquaporin-7 (454 aa).

Topologically, residues 1-71 are cytoplasmic; it reads MNINEPRDGG…LHLHNKTRNH (71 aa). The chain crosses the membrane as a helical span at residues 72–92; the sequence is FVATVAEFAGTTLFLFFAFSG. The Extracellular segment spans residues 93–115; that stretch reads TQVALLATPANDSNVVGTPSNPA. N-linked (GlcNAc...) asparagine glycosylation occurs at asparagine 103. The chain crosses the membrane as a helical span at residues 116 to 136; sequence QLLYVSLCFGFSLAVNAWVFF. The Cytoplasmic portion of the chain corresponds to 137–163; sequence RISGGLFNPAVTMGMCIVGALPYFRGL. Residues 144–146 carry the NPA 1 motif; it reads NPA. Residues 164–184 traverse the membrane as a helical segment; sequence LLIFAQIIGGIAAAAIVSALF. Over 185 to 202 the chain is Extracellular; the sequence is PGPITFRTSLGGGTSIVQ. The chain crosses the membrane as a helical span at residues 203-223; the sequence is GLFIEMFLTAELVFTIFMLAA. The Cytoplasmic segment spans residues 224–229; that stretch reads EKHKGT. A helical membrane pass occupies residues 230 to 250; sequence FIAPIGIGLSLFIAELTGVYF. Over 251–274 the chain is Extracellular; it reads TGGSVNPARSFGPSVVSGQFTGYH. An NPA 2 motif is present at residues 256-258; that stretch reads NPA. A helical membrane pass occupies residues 275–295; that stretch reads WIYWVGPILGAILASAFYKFI. Residues 296–454 lie on the Cytoplasmic side of the membrane; that stretch reads KMLEYETANP…ENLRDNTHNN (159 aa). The disordered stretch occupies residues 343–454; sequence GASHVHENGN…ENLRDNTHNN (112 aa).

Belongs to the MIP/aquaporin (TC 1.A.8) family.

The protein localises to the membrane. It carries out the reaction H2O(in) = H2O(out). Functionally, water channel required to facilitate the transport of water across membranes. Involved in conidiation. This chain is Aquaporin-7, found in Botryotinia fuckeliana (strain B05.10) (Noble rot fungus).